Here is a 350-residue protein sequence, read N- to C-terminus: Dihydroorotase (350 aa).

Positions 17 and 19 each coordinate Zn(2+). Residues 19–21 (HLR) and asparagine 45 contribute to the substrate site. The Zn(2+) site is built by lysine 103, histidine 140, and histidine 178. Residue lysine 103 is modified to N6-carboxylysine. Histidine 140 lines the substrate pocket. Residue leucine 223 participates in substrate binding. Residue aspartate 251 participates in Zn(2+) binding. Aspartate 251 is a catalytic residue. The substrate site is built by histidine 255 and alanine 267.

This sequence belongs to the metallo-dependent hydrolases superfamily. DHOase family. Class II DHOase subfamily. Homodimer. Requires Zn(2+) as cofactor.

The catalysed reaction is (S)-dihydroorotate + H2O = N-carbamoyl-L-aspartate + H(+). It functions in the pathway pyrimidine metabolism; UMP biosynthesis via de novo pathway; (S)-dihydroorotate from bicarbonate: step 3/3. In terms of biological role, catalyzes the reversible cyclization of carbamoyl aspartate to dihydroorotate. The sequence is that of Dihydroorotase from Erwinia tasmaniensis (strain DSM 17950 / CFBP 7177 / CIP 109463 / NCPPB 4357 / Et1/99).